Here is a 53-residue protein sequence, read N- to C-terminus: FLGTINLSLCEQERDADEEKRDEPDESDVEVEKRFLPAALAGIGGILGKLFGK.

A signal peptide spans 1 to 10 (FLGTINLSLC). A propeptide spanning residues 11–34 (EQERDADEEKRDEPDESDVEVEKR) is cleaved from the precursor. Phenylalanine 51 carries the post-translational modification Phenylalanine amide.

Its subcellular location is the secreted. The protein resides in the target cell membrane. Non-amphipathic mildly cationic alpha-helical antimicrobial peptide with potent activity against Gram-positive (including methicillin-resistant Staphylococcus aureus (MRSA)) and Gram-negative bacteria, and some fungi, as well as against Trypanosoma and Leishmania (both promastigote and amastigote forms). Strongly and selectively perturbs anionic bilayer membranes by interacting with the polar head groups and acyl region of the phospholipids, with formation of regions of two coexisting phases, one phase rich in peptide and the other lipid-rich. Shows low hemolytic activity (LC(50)=44 uM) and a low toxicity for human monocytes THP-1 and THP-1-derived macrophages. Is not toxic to human hepatoma-derived cells. This Pelophylax saharicus (Sahara frog) protein is Temporin-SHd.